Here is a 358-residue protein sequence, read N- to C-terminus: MATSSTTPQNLSFVLEGIHQVKFEDRPIPELRDPHDVIVNVKYTGICGSDVHYWEHGAIGHFVVKDPMVLGHESSGVVAKVGSAVTSLKVGDRVAMEPGVPCRRCEPCKAGKYNLCEKMAFAATPPYDGTLAKYYPLPEDFCYKLPENISLQEGALMEPLGVAVHITRQASIKPGESVVVFGAGPVGLLCCAVARAFGASKIIAVDIQKTRLDFAKKYAATAIFEPAKVSAVANADQMREENDLGPGADVVIDASGAEPSVHTGIHVLRPGGTYVQGGMGRNEINFPIMAACTKELTIKGSFRYGSGDYKLAVDLVASGKVNVKDLITGVVEFQEAEQAFKEVKAGKGIKTLIAGVRD.

Residues Cys-47, His-72, and Glu-73 each contribute to the Zn(2+) site. Residue 182–187 (GAGPVG) coordinates NAD(+).

This sequence belongs to the zinc-containing alcohol dehydrogenase family. Zn(2+) serves as cofactor.

The enzyme catalyses xylitol + NAD(+) = D-xylulose + NADH + H(+). Its pathway is carbohydrate degradation; L-arabinose degradation via L-arabinitol; D-xylulose 5-phosphate from L-arabinose (fungal route): step 4/5. Functionally, xylitol dehydrogenase which catalyzes the conversion of xylitol to D-xylulose. Xylose is a major component of hemicelluloses such as xylan. Most fungi utilize D-xylose via three enzymatic reactions, xylose reductase (XR), xylitol dehydrogenase (XDH), and xylulokinase, to form xylulose 5-phosphate, which enters pentose phosphate pathway. This chain is Probable D-xylulose reductase A (xdhA), found in Aspergillus clavatus (strain ATCC 1007 / CBS 513.65 / DSM 816 / NCTC 3887 / NRRL 1 / QM 1276 / 107).